A 178-amino-acid polypeptide reads, in one-letter code: ATP synthase subunit delta (178 aa).

The protein belongs to the ATPase delta chain family. As to quaternary structure, F-type ATPases have 2 components, F(1) - the catalytic core - and F(0) - the membrane proton channel. F(1) has five subunits: alpha(3), beta(3), gamma(1), delta(1), epsilon(1). F(0) has three main subunits: a(1), b(2) and c(10-14). The alpha and beta chains form an alternating ring which encloses part of the gamma chain. F(1) is attached to F(0) by a central stalk formed by the gamma and epsilon chains, while a peripheral stalk is formed by the delta and b chains.

Its subcellular location is the cell inner membrane. F(1)F(0) ATP synthase produces ATP from ADP in the presence of a proton or sodium gradient. F-type ATPases consist of two structural domains, F(1) containing the extramembraneous catalytic core and F(0) containing the membrane proton channel, linked together by a central stalk and a peripheral stalk. During catalysis, ATP synthesis in the catalytic domain of F(1) is coupled via a rotary mechanism of the central stalk subunits to proton translocation. Functionally, this protein is part of the stalk that links CF(0) to CF(1). It either transmits conformational changes from CF(0) to CF(1) or is implicated in proton conduction. The chain is ATP synthase subunit delta from Methylobacillus flagellatus (strain ATCC 51484 / DSM 6875 / VKM B-1610 / KT).